Here is a 336-residue protein sequence, read N- to C-terminus: Calcium uniporter regulatory subunit MCUb, mitochondrial (336 aa).

The N-terminal 35 residues, 1–35, are a transit peptide targeting the mitochondrion; that stretch reads MLQRGLWPWRTRLLPTPGTWRPARPWPLPPPPQVL. A coiled-coil region spans residues 179–210; it reads ESQKKREHHLLEKIDHLKEQLQPLEQVKAGIE. 2 helical membrane passes run 220-240 and 250-270; these read LLWA…WLTW and PVTY…FIVT. A coiled-coil region spans residues 297–323; that stretch reads FDVQQYNKLKEDLAKAKESLKQARHSL.

This sequence belongs to the MCU (TC 1.A.77) family. Homooligomer. Associates with the uniplex complex, composed of MCU, MICU1, MICU2 and EMRE/SMDT1, inhibiting its activity.

It is found in the mitochondrion inner membrane. In terms of biological role, negative regulator of the mitochondrial calcium uniporter (MCU), a channel that mediates calcium uptake into the mitochondrial matrix. MCUB is required to limit mitochondrial calcium overload during stress. Acts as a dominant-negative regulator that displaces MCU from the functional uniplex complex and thereby decreases the association of calcium sensors MICU1 and MICU2, preventing channel gating. Mitochondrial calcium homeostasis plays key roles in mitochondrial metabolism. Acts as an important regulator of mitochondrial metabolism in response to stress in muscle cells: induced in response to fasting, leading to restrict mitochondrial calcium uptake, resulting in reprogramming of mitochondria toward fatty acid oxidation preference. Acts as a regulator of macrophage polarization during skeletal muscle regeneration: inhibition of mitochondrial calcium uptake drives differentiation of macrophages with anti-inflammatory profile, promoting the differentiation and fusion of satellite cells. The sequence is that of Calcium uniporter regulatory subunit MCUb, mitochondrial from Homo sapiens (Human).